The primary structure comprises 339 residues: Cullin-associated NEDD8-dissociated protein 1, N-terminal part (339 aa).

HEAT repeat units follow at residues 5 to 42 (HTIQQNLNGLLSKLNDPDPDMRYMSLNDLYGILSNPCS) and 50 to 87 (ASATRLAEGLLKALDDQHGDVQNQALKCLGPLVARLPL).

In terms of assembly, interacts with candA-C. Interacts with unneddylated cullins culA and culD; interaction occurs only when complexed with candA-C.

The protein localises to the nucleus. In terms of biological role, assembly factor of SCF (SKP1-CUL1-F-box protein) E3 ubiquitin ligase complexes that promotes the exchange of the substrate-recognition F-box subunit in SCF complexes, thereby playing a key role in the cellular repertoire of SCF complexes. Acts as a F-box protein exchange factor when interacting with candA-C. The chain is Cullin-associated NEDD8-dissociated protein 1, N-terminal part (candA-N) from Emericella nidulans (strain FGSC A4 / ATCC 38163 / CBS 112.46 / NRRL 194 / M139) (Aspergillus nidulans).